Reading from the N-terminus, the 362-residue chain is 3-dehydroquinate synthase (362 aa).

NAD(+)-binding positions include 71–76, 105–109, 129–130, Lys-142, and Lys-151; these read DGEKYK, GVIGD, and TT. The Zn(2+) site is built by Glu-184, His-248, and His-265.

It belongs to the sugar phosphate cyclases superfamily. Dehydroquinate synthase family. Requires Co(2+) as cofactor. It depends on Zn(2+) as a cofactor. NAD(+) serves as cofactor.

It is found in the cytoplasm. It catalyses the reaction 7-phospho-2-dehydro-3-deoxy-D-arabino-heptonate = 3-dehydroquinate + phosphate. It participates in metabolic intermediate biosynthesis; chorismate biosynthesis; chorismate from D-erythrose 4-phosphate and phosphoenolpyruvate: step 2/7. Its function is as follows. Catalyzes the conversion of 3-deoxy-D-arabino-heptulosonate 7-phosphate (DAHP) to dehydroquinate (DHQ). The chain is 3-dehydroquinate synthase from Hamiltonella defensa subsp. Acyrthosiphon pisum (strain 5AT).